A 217-amino-acid polypeptide reads, in one-letter code: Imidazole glycerol phosphate synthase subunit HisH (217 aa).

Residues 3–217 (TIAIVDYGMG…IYRNFVHWKP (215 aa)) enclose the Glutamine amidotransferase type-1 domain. Cys-82 serves as the catalytic Nucleophile. Active-site residues include His-197 and Glu-199.

As to quaternary structure, heterodimer of HisH and HisF.

It localises to the cytoplasm. It carries out the reaction 5-[(5-phospho-1-deoxy-D-ribulos-1-ylimino)methylamino]-1-(5-phospho-beta-D-ribosyl)imidazole-4-carboxamide + L-glutamine = D-erythro-1-(imidazol-4-yl)glycerol 3-phosphate + 5-amino-1-(5-phospho-beta-D-ribosyl)imidazole-4-carboxamide + L-glutamate + H(+). It catalyses the reaction L-glutamine + H2O = L-glutamate + NH4(+). It participates in amino-acid biosynthesis; L-histidine biosynthesis; L-histidine from 5-phospho-alpha-D-ribose 1-diphosphate: step 5/9. In terms of biological role, IGPS catalyzes the conversion of PRFAR and glutamine to IGP, AICAR and glutamate. The HisH subunit catalyzes the hydrolysis of glutamine to glutamate and ammonia as part of the synthesis of IGP and AICAR. The resulting ammonia molecule is channeled to the active site of HisF. This is Imidazole glycerol phosphate synthase subunit HisH from Ralstonia nicotianae (strain ATCC BAA-1114 / GMI1000) (Ralstonia solanacearum).